The primary structure comprises 186 residues: Oligoribonuclease (186 aa).

The 164-residue stretch at 12–175 (LIWIDLEMTG…DDIKDSIKEL (164 aa)) folds into the Exonuclease domain. Residue Tyr-133 is part of the active site.

This sequence belongs to the oligoribonuclease family.

Its subcellular location is the cytoplasm. In terms of biological role, 3'-to-5' exoribonuclease specific for small oligoribonucleotides. The chain is Oligoribonuclease from Wigglesworthia glossinidia brevipalpis.